The primary structure comprises 323 residues: Calcium homeostasis modulator protein 2 (323 aa).

Over M1 to V21 the chain is Cytoplasmic. Residues L14–F39 form a central pore region. A helical membrane pass occupies residues M22–A43. At F44 to R52 the chain is on the extracellular side. Disulfide bonds link C46–C130 and C48–C162. A helical membrane pass occupies residues N53–N76. The Cytoplasmic portion of the chain corresponds to N77 to L101. The chain crosses the membrane as a helical span at residues L102–L132. At S133–R179 the chain is on the extracellular side. Residues E145–H152 are hemichannel docking. Residues L180 to K206 form a helical membrane-spanning segment. Residues H207 to S323 are Cytoplasmic-facing. An intersubunit interaction region spans residues Y214–F251.

This sequence belongs to the CALHM family. Homo-undecamer. Two undecameric hemichannels can assemble in a head-to-head manner to form a gap junction.

It is found in the cell membrane. It carries out the reaction ATP(in) = ATP(out). Functionally, pore-forming subunit of Ca(2+) homeostasis modulator channels. Mediates ATP release from astrocytes and ATP-induced Ca(2+) influx in microglia thus regulating neuronal ATP and Ca(2+) homeostasis, synaptic transmission and neuroinflammatory response. May form intercellular gap junctions. The gating mechanism remains unknown. In Bos taurus (Bovine), this protein is Calcium homeostasis modulator protein 2 (CALHM2).